Consider the following 575-residue polypeptide: Alpha-(1,6)-fucosyltransferase (575 aa).

The Cytoplasmic segment spans residues 1–9; sequence MRPWTGSWR. A helical; Signal-anchor for type II membrane protein membrane pass occupies residues 10–30; it reads WIMLILFAWGTLLFYIGGHLV. Residues 31-575 lie on the Lumenal side of the membrane; that stretch reads RDNDHPDHSS…KVPHVPEAEK (545 aa). Cystine bridges form between Cys204/Cys266, Cys212/Cys230, and Cys218/Cys222. In terms of domain architecture, GT23 spans 206–493; the sequence is KAKKLVCNIN…PDASANFHSL (288 aa). Position 278 is a phosphoserine (Ser278). Positions 299-305 match the SH3-binding motif; sequence PRPPYLP. The interval 365 to 366 is important for donor substrate binding; sequence RR. Cys465 and Cys472 are joined by a disulfide. The SH3 domain occupies 502-563; the sequence is QNAHNQIAIY…PSYKVREKIE (62 aa).

The protein belongs to the glycosyltransferase 23 family. Tyrosine phosphorylated by PKDCC/VLK. As to expression, highest expression found in brain. Also found in heart, lung, spleen and kidney.

The protein resides in the golgi apparatus. It localises to the golgi stack membrane. It catalyses the reaction N(4)-{beta-D-GlcNAc-(1-&gt;2)-alpha-D-Man-(1-&gt;3)-[beta-D-GlcNAc-(1-&gt;2)-alpha-D-Man-(1-&gt;6)]-beta-D-Man-(1-&gt;4)-beta-D-GlcNAc-(1-&gt;4)-beta-D-GlcNAc}-L-asparaginyl-[protein] + GDP-beta-L-fucose = an N(4)-{beta-D-GlcNAc-(1-&gt;2)-alpha-D-Man-(1-&gt;3)-[beta-D-GlcNAc-(1-&gt;2)-alpha-D-Man-(1-&gt;6)]-beta-D-Man-(1-&gt;4)-beta-D-GlcNAc-(1-&gt;4)-[alpha-L-Fuc-(1-&gt;6)]-beta-D-GlcNAc}-L-asparaginyl-[protein] + GDP + H(+). Its pathway is protein modification; protein glycosylation. Its function is as follows. Catalyzes the addition of fucose in alpha 1-6 linkage to the first GlcNAc residue, next to the peptide chains in N-glycans. This is Alpha-(1,6)-fucosyltransferase (FUT8) from Bos taurus (Bovine).